We begin with the raw amino-acid sequence, 101 residues long: Ubiquitin-related modifier 1 (101 aa).

1-thioglycine is present on Gly101. Gly101 is covalently cross-linked (Glycyl lysine isopeptide (Gly-Lys) (interchain with K-? in acceptor proteins)).

This sequence belongs to the URM1 family. C-terminal thiocarboxylation occurs in 2 steps, it is first acyl-adenylated (-COAMP) via the hesA/moeB/thiF part of UBA4, then thiocarboxylated (-COSH) via the rhodanese domain of UBA4.

The protein resides in the cytoplasm. It functions in the pathway tRNA modification; 5-methoxycarbonylmethyl-2-thiouridine-tRNA biosynthesis. Functionally, acts as a sulfur carrier required for 2-thiolation of mcm(5)S(2)U at tRNA wobble positions of cytosolic tRNA(Lys), tRNA(Glu) and tRNA(Gln). Serves as sulfur donor in tRNA 2-thiolation reaction by being thiocarboxylated (-COSH) at its C-terminus by the MOCS3 homolog UBA4. The sulfur is then transferred to tRNA to form 2-thiolation of mcm(5)S(2)U. Prior mcm(5) tRNA modification by the elongator complex is required for 2-thiolation. Also acts as a ubiquitin-like protein (UBL) that is covalently conjugated via an isopeptide bond to lysine residues of target proteins such as AHP1. The thiocarboxylated form serves as substrate for conjugation and oxidative stress specifically induces the formation of UBL-protein conjugates. This is Ubiquitin-related modifier 1 from Candida albicans (strain SC5314 / ATCC MYA-2876) (Yeast).